A 461-amino-acid chain; its full sequence is MNNFGNEEFDCHFLDEGFTAKDILDQKINEVSSSDDKDAFYVADLGDILKKHLRWLKALPRVTPFYAVKCNDSKAIVKTLAATGTGFDCASKTEIQLVQSLGVPPERIIYANPCKQVSQIKYAANNGVQMMTFDSEVELMKVARAHPKAKLVLRIATDDSKAVCRLSVKFGATLRTSRLLLERAKELNIDVVGVSFHVGSGCTDPETFVQAISDARCVFDMGAEVGFSMYLLDIGGGFPGSEDVKLKFEEITGVINPALDKYFPSDSGVRIIAEPGRYYVASAFTLAVNIIAKKIVLKEQTGSDDEDESSEQTFMYYVNDGVYGSFNCILYDHAHVKPLLQKRPKPDEKYYSSSIWGPTCDGLDRIVERCDLPEMHVGDWMLFENMGAYTVAAASTFNGFQRPTIYYVMSGPAWQLMQQFQNPDFPPEVEEQDASTLPVSCAWESGMKRHRAACASASINV.

Residue lysine 69 is modified to N6-(pyridoxal phosphate)lysine. Residues serine 200, glycine 237, and 274 to 277 (EPGR) contribute to the pyridoxal 5'-phosphate site. Residue serine 303 is modified to Phosphoserine; by CK2. 331–332 (YD) is a substrate binding site. The Proton donor; shared with dimeric partner role is filled by cysteine 360. Cysteine 360 is subject to S-nitrosocysteine; in inhibited form. Aspartate 361 provides a ligand contact to substrate. Position 389 (tyrosine 389) interacts with pyridoxal 5'-phosphate.

It belongs to the Orn/Lys/Arg decarboxylase class-II family. As to quaternary structure, homodimer. Only the dimer is catalytically active, as the active sites are constructed of residues from both monomers. Does not form a heterodimer with AZIN2. Requires pyridoxal 5'-phosphate as cofactor. S-Nitrosylation inhibits the enzyme. S-Nitrosylated in vitro on 4 cysteine residues.

It carries out the reaction L-ornithine + H(+) = putrescine + CO2. Its pathway is amine and polyamine biosynthesis; putrescine biosynthesis via L-ornithine pathway; putrescine from L-ornithine: step 1/1. Inhibited by S-nitrosylation. Inhibited by antizymes (AZs) OAZ1, OAZ2 and OAZ3 in response to polyamine levels. AZs inhibit the assembly of the functional homodimer by binding to ODC monomers. Additionally, OAZ1 targets ODC monomers for ubiquitin-independent proteolytic destruction by the 26S proteasome. Inhibited by 1-amino-oxy-3-aminopropane (APA, an isosteric analog of putrescine). Irreversibly inhibited by alpha-difluoromethylornithine (DFMO). Functionally, catalyzes the first and rate-limiting step of polyamine biosynthesis that converts ornithine into putrescine, which is the precursor for the polyamines, spermidine and spermine. Polyamines are essential for cell proliferation and are implicated in cellular processes, ranging from DNA replication to apoptosis. The polypeptide is Ornithine decarboxylase (ODC1) (Homo sapiens (Human)).